The following is a 124-amino-acid chain: Small ribosomal subunit protein uS12 (124 aa).

Asp-89 bears the 3-methylthioaspartic acid mark.

Belongs to the universal ribosomal protein uS12 family. As to quaternary structure, part of the 30S ribosomal subunit. Contacts proteins S8 and S17. May interact with IF1 in the 30S initiation complex.

Functionally, with S4 and S5 plays an important role in translational accuracy. Its function is as follows. Interacts with and stabilizes bases of the 16S rRNA that are involved in tRNA selection in the A site and with the mRNA backbone. Located at the interface of the 30S and 50S subunits, it traverses the body of the 30S subunit contacting proteins on the other side and probably holding the rRNA structure together. The combined cluster of proteins S8, S12 and S17 appears to hold together the shoulder and platform of the 30S subunit. In Tolumonas auensis (strain DSM 9187 / NBRC 110442 / TA 4), this protein is Small ribosomal subunit protein uS12.